The following is a 143-amino-acid chain: Phosphatidylethanolamine-binding protein homolog R644 (143 aa).

It belongs to the phosphatidylethanolamine-binding protein family.

The protein resides in the virion. The chain is Phosphatidylethanolamine-binding protein homolog R644 from Acanthamoeba polyphaga mimivirus (APMV).